The sequence spans 144 residues: Maximins 8/H7 (144 aa).

Positions 1 to 18 (MKFKYIVAVSFLIASAYA) are cleaved as a signal peptide. A propeptide spanning residues 19-43 (RSEENDEQSLSQRDVLEEESLREIR) is cleaved from the precursor. Residue asparagine 70 is modified to Asparagine amide. Positions 74–123 (TAEDHEVMKRLEAVMRDLDSLDYPEEASERETRGFNQEEIANLFTKKEKR) are excised as a propeptide. Leucine 143 is subject to Leucine amide.

This sequence belongs to the bombinin family. Expressed by the skin glands.

It is found in the secreted. In terms of biological role, maximin-8 shows antimicrobial activity against bacteria and against the fungus C.albicans. It has little hemolytic activity. Functionally, maximin-H7 shows antimicrobial activity against bacteria and against the fungus C.albicans. Shows strong hemolytic activity. The polypeptide is Maximins 8/H7 (Bombina maxima (Giant fire-bellied toad)).